Consider the following 234-residue polypeptide: tRNA (guanine-N(1)-)-methyltransferase (234 aa).

Residues Gly-115 and 135–140 (VGDYIL) contribute to the S-adenosyl-L-methionine site.

The protein belongs to the RNA methyltransferase TrmD family. In terms of assembly, homodimer.

The protein resides in the cytoplasm. The enzyme catalyses guanosine(37) in tRNA + S-adenosyl-L-methionine = N(1)-methylguanosine(37) in tRNA + S-adenosyl-L-homocysteine + H(+). Specifically methylates guanosine-37 in various tRNAs. This Rickettsia rickettsii (strain Iowa) protein is tRNA (guanine-N(1)-)-methyltransferase.